We begin with the raw amino-acid sequence, 164 residues long: IQSTNMDQQGSLTEDSMNSFIRTLIQAGIWKNKVPKQTARAKDDTQTTVKKTEAEADAVASKEARLGFQPIVSVDAELLRQQRRFSSPRVLLSENTPLEPPPLYLTEQPVALNRTSRRKREGKSHRGEYSVCDSESRWVTDKSSAVDIRGHQVTVLGEIRMGPS.

The N-terminal stretch at I1–S3 is a signal peptide. A propeptide spanning residues T4–R120 is cleaved from the precursor. N113 carries N-linked (GlcNAc...) asparagine glycosylation.

The protein belongs to the NGF-beta family.

It is found in the secreted. In terms of biological role, seems to promote the survival of visceral and proprioceptive sensory neurons. The protein is Neurotrophin-3 (NTF3) of Sanzinia madagascariensis (Madagascar tree boa).